The following is a 268-amino-acid chain: NAC domain-containing protein 41 (268 aa).

Residues 15–160 enclose the NAC domain; that stretch reads LPPGFRFHPT…NWVLCRVFLK (146 aa). Residues 109–166 mediate DNA binding; it reads VGMKKTLVFYKGKPPNGTRTNWVLHEYRLVDSQQDSLYGQNMNWVLCRVFLKKRSNSN. Residues 166–190 are disordered; sequence NSKRKEDEKEEVENEKETETERERE. A compositionally biased stretch (basic and acidic residues) spans 180 to 190; sequence EKETETERERE.

The protein localises to the nucleus. In terms of biological role, transcription activator of the mannan synthase CSLA9. Recognizes and binds to DNA-specific sequence of CSLA9 promoter. This Arabidopsis thaliana (Mouse-ear cress) protein is NAC domain-containing protein 41.